The primary structure comprises 572 residues: Capsid vertex component 2 (572 aa).

The interval 1–58 is interaction with major capsid protein/MCP; that stretch reads MFRPRFEPMNLPKDSNKPSTLMVLADRLNFISCAEGSSKYASKLFEGTLIDAEIMTNR.

Belongs to the herpesviridae CVC2 protein family. Heterodimerizes with CVC1. Interacts with major capsid protein/MCP and triplex capsid protein 1/TRX1 at the pentamer vertices. Interacts with the large tegument protein/LTP.

It is found in the virion. The protein localises to the host nucleus. In terms of biological role, capsid vertex-specific component that plays a role during viral DNA encapsidation, assuring correct genome cleavage and presumably stabilizing capsids that contain full-length viral genomes. Participates in the interaction between the capsid and the tegument through interaction with the large tegument protein/LTP. The protein is Capsid vertex component 2 of Infectious laryngotracheitis virus (strain Thorne V882) (ILTV).